Reading from the N-terminus, the 409-residue chain is MDNNFIFGIIAFTALVLVLAVIILFAKSKLVDSGDITISINDDPEKGITLPAGGKLLGALASKGIFVSSACGGGGSCGQCKVQVNSGGGEILPTELSHISKKEAKEGWRLACQVNVKSSMDVELPEEIFGVKKWECTVISNDNKATFIKELKLQIPEGEEVPFRAGGYIQIEAEPHTVNYKDFDIPKEYHEDWDKFNLWRYVSKVDEHIIRAYSMASYPEEKGIIMLNVRIATPPPRQPDAPPGQMSSYIWSLKAGDKVTISGPFGEFFAKETDNEMVFIGGGAGMAPMRSHIFDQLKRLKSKRKMSFWYGARSKREMFYVEDFDQLQAENDNFKWHVALSDPLPEDNWDGYTGFIHNVLYENYLKNHEAPEDCEYYMCGPPVMNAAVIGMLKSLGVEDENILLDDFGG.

A helical transmembrane segment spans residues 5 to 25; the sequence is FIFGIIAFTALVLVLAVIILF. The region spanning 34 to 128 is the 2Fe-2S ferredoxin-type domain; sequence GDITISINDD…SMDVELPEEI (95 aa). The [2Fe-2S] cluster site is built by Cys-71, Cys-77, Cys-80, and Cys-112. An FAD-binding FR-type domain is found at 131–271; the sequence is VKKWECTVIS…SGPFGEFFAK (141 aa).

The protein belongs to the NqrF family. Composed of six subunits; NqrA, NqrB, NqrC, NqrD, NqrE and NqrF. [2Fe-2S] cluster is required as a cofactor. It depends on FAD as a cofactor.

The protein resides in the cell inner membrane. It carries out the reaction a ubiquinone + n Na(+)(in) + NADH + H(+) = a ubiquinol + n Na(+)(out) + NAD(+). Its function is as follows. NQR complex catalyzes the reduction of ubiquinone-1 to ubiquinol by two successive reactions, coupled with the transport of Na(+) ions from the cytoplasm to the periplasm. The first step is catalyzed by NqrF, which accepts electrons from NADH and reduces ubiquinone-1 to ubisemiquinone by a one-electron transfer pathway. This is Na(+)-translocating NADH-quinone reductase subunit F from Haemophilus ducreyi (strain 35000HP / ATCC 700724).